Reading from the N-terminus, the 555-residue chain is Dihydroxy-acid dehydratase (555 aa).

[2Fe-2S] cluster is bound at residue Cys-46. Asp-78 serves as a coordination point for Mg(2+). Residue Cys-119 coordinates [2Fe-2S] cluster. Positions 120 and 121 each coordinate Mg(2+). Lys-121 carries the N6-carboxylysine modification. [2Fe-2S] cluster is bound at residue Cys-191. Glu-442 is a binding site for Mg(2+). Ser-468 functions as the Proton acceptor in the catalytic mechanism.

Belongs to the IlvD/Edd family. Homodimer. [2Fe-2S] cluster serves as cofactor. Requires Mg(2+) as cofactor.

The enzyme catalyses (2R)-2,3-dihydroxy-3-methylbutanoate = 3-methyl-2-oxobutanoate + H2O. It carries out the reaction (2R,3R)-2,3-dihydroxy-3-methylpentanoate = (S)-3-methyl-2-oxopentanoate + H2O. The protein operates within amino-acid biosynthesis; L-isoleucine biosynthesis; L-isoleucine from 2-oxobutanoate: step 3/4. It participates in amino-acid biosynthesis; L-valine biosynthesis; L-valine from pyruvate: step 3/4. In terms of biological role, functions in the biosynthesis of branched-chain amino acids. Catalyzes the dehydration of (2R,3R)-2,3-dihydroxy-3-methylpentanoate (2,3-dihydroxy-3-methylvalerate) into 2-oxo-3-methylpentanoate (2-oxo-3-methylvalerate) and of (2R)-2,3-dihydroxy-3-methylbutanoate (2,3-dihydroxyisovalerate) into 2-oxo-3-methylbutanoate (2-oxoisovalerate), the penultimate precursor to L-isoleucine and L-valine, respectively. The polypeptide is Dihydroxy-acid dehydratase (Thermus thermophilus (strain ATCC 27634 / DSM 579 / HB8)).